The primary structure comprises 927 residues: Nuclear factor of activated T-cells, cytoplasmic 2 (927 aa).

Residues 1–29 (MDVPEPQPDPDGGDGPGHEPGGSPQDELD) are disordered. A phosphoserine mark is found at S23, S53, S54, S56, S99, S107, and S110. The tract at residues 111 to 116 (PRIEIT) is calcineurin-binding. A transactivation domain A (TAD-A) region spans residues 119–201 (HELMQAGGAL…CVSPNNAGPD (83 aa)). Phosphoserine is present on residues S136, S150, S170, S173, S174, S176, S177, S179, and S182. The segment at 163 to 177 (YREPLCLSPASSGSS) is required for cytoplasmic retention of the phosphorylated form. 2 consecutive repeat copies span residues 186-202 (SPYT…GPDD) and 215-231 (SPRT…LAED). The tract at residues 186–292 (SPYTSPCVSP…PHVALQDDSI (107 aa)) is 3 X approximate SP repeats. 2 disordered regions span residues 203-299 (LCPQ…YPPT) and 322-341 (SKIW…PSKA). 5 positions are modified to phosphoserine: S215, S219, S223, S238, and S245. The segment covering 216–226 (PRTSPIMSPRT) has biased composition (polar residues). A Nuclear localization signal motif is present at residues 253–255 (KRR). S257, S270, S276, S278, S282, S328, and S365 each carry phosphoserine. Positions 267–277 (PAASPQRSRSP) are enriched in low complexity. Residues 274 to 290 (SRSPSPQPSPHVALQDD) form a 3; approximate repeat. Residues 394-576 (ASLPPLEWPL…NPIECSQRSA (183 aa)) enclose the RHD domain. Residues 423-430 (RAHYETEG) mediate DNA binding. Phosphoserine is present on residues S757, S759, and S761. 2 disordered regions span residues 790 to 812 (AGSQ…QQAS) and 841 to 903 (FGPS…QNLD). Positions 798–812 (GSTLPHTSSASQQAS) are enriched in polar residues. S860 is modified (phosphoserine).

In terms of assembly, member of the multicomponent NFATC transcription complex that consists of at least two components, a pre-existing cytoplasmic component NFATC2 and an inducible nuclear component NFATC1. Other members such as NFATC4, NFATC3 or members of the activating protein-1 family, MAF, GATA4 and Cbp/p300 can also bind the complex. The phosphorylated form specifically interacts with XPO1; which mediates nuclear export. NFATC proteins bind to DNA as monomers. Interacts with NFATC2IP. Interacts with FOXP3. Interacts with TBX21 ('Thr-302' phosphorylated form). Interacts with KAT2A. Interacts with HOMER2 and HOMER3; this interaction competes with calcineurin/PPP3CA-binding and hence prevents NFATC2 dephosphorylation and activation. Interacts with protein phosphatase PPP3CA/calcineurin A. Interacts with AKAP5 (via leucine zipper domain); this is required for NFATC2/NFAT1 recruitment to CRAC channels. In resting cells, phosphorylated by NFATC-kinase on at least 18 sites in the 99-365 region. Upon cell stimulation, all these sites except Ser-245 are dephosphorylated by calcineurin. Dephosphorylation induces a conformational change that simultaneously exposes an NLS and masks an NES, which results in nuclear localization. Simultaneously, one site among Ser-53; Ser-54 and Ser-56 is phosphorylated; which is required for full transcriptional activity. In terms of processing, ubiquitinated in endothelial cells by RNF213 downstream of the non-canonical Wnt signaling pathway, leading to its degradation by the proteasome. In terms of tissue distribution, expressed in spleen, heart, testis, brain, placenta, muscle and pancreas. Expressed in the thymus. Expressed in the lung. Expressed in cartilage.

It is found in the cytoplasm. Its subcellular location is the nucleus. In terms of biological role, plays a role in the inducible expression of cytokine genes in T cells, especially in the induction of the IL-2, IL-3, IL-4, TNF-alpha or GM-CSF. Promotes invasive migration through the activation of GPC6 expression and WNT5A signaling pathway. Is involved in the negative regulation of chondrogenesis. Recruited by AKAP5 to ORAI1 pore-forming subunit of CRAC channels in Ca(2+) signaling microdomains where store-operated Ca(2+) influx is coupled to calmodulin and calcineurin signaling and activation of NFAT-dependent transcriptional responses. The protein is Nuclear factor of activated T-cells, cytoplasmic 2 (Nfatc2) of Mus musculus (Mouse).